The primary structure comprises 438 residues: tRNA-2-methylthio-N(6)-dimethylallyladenosine synthase (438 aa).

The 117-residue stretch at 2–118 folds into the MTTase N-terminal domain; that stretch reads KSFYLETFGC…LADMVRDAEL (117 aa). Positions 11, 47, 81, 157, 161, and 164 each coordinate [4Fe-4S] cluster. Residues 143–373 enclose the Radical SAM core domain; that stretch reads PSAEVSRFVT…LALQEEITRQ (231 aa). The TRAM domain occupies 376–438; sequence QMDIGQVLPV…YRNSHLGERV (63 aa).

This sequence belongs to the methylthiotransferase family. MiaB subfamily. In terms of assembly, monomer. [4Fe-4S] cluster is required as a cofactor.

The protein localises to the cytoplasm. The catalysed reaction is N(6)-dimethylallyladenosine(37) in tRNA + (sulfur carrier)-SH + AH2 + 2 S-adenosyl-L-methionine = 2-methylsulfanyl-N(6)-dimethylallyladenosine(37) in tRNA + (sulfur carrier)-H + 5'-deoxyadenosine + L-methionine + A + S-adenosyl-L-homocysteine + 2 H(+). In terms of biological role, catalyzes the methylthiolation of N6-(dimethylallyl)adenosine (i(6)A), leading to the formation of 2-methylthio-N6-(dimethylallyl)adenosine (ms(2)i(6)A) at position 37 in tRNAs that read codons beginning with uridine. The protein is tRNA-2-methylthio-N(6)-dimethylallyladenosine synthase of Syntrophotalea carbinolica (strain DSM 2380 / NBRC 103641 / GraBd1) (Pelobacter carbinolicus).